Consider the following 115-residue polypeptide: MGRGRGVSSGGGQSSLGYLFGGGETAPAAKAKPAAAAEKETTPAPVKKAAVAAAASPSAAEKMKEIPAGIQSTQANNYFRAQGQNCGNFLTDRPSTKVHAAPGGGSSLGYLFGGK.

Residues 29–48 are disordered; sequence AKAKPAAAAEKETTPAPVKK.

This sequence belongs to the SPIRAL1 family.

Functionally, acts in maintaining the cortical microtubules organization essential for anisotropic cell growth. The chain is Protein SPIRAL1-like 2 from Oryza sativa subsp. japonica (Rice).